A 63-amino-acid polypeptide reads, in one-letter code: Cypmaclein (63 aa).

The protein belongs to the GASA family. Expressed in pollen (at protein level).

The sequence is that of Cypmaclein from Cupressus sempervirens (Italian cypress).